A 225-amino-acid polypeptide reads, in one-letter code: 3-dehydroquinate dehydratase (225 aa).

Residues 30-32 (EWR) and R62 each bind 3-dehydroquinate. The active-site Proton donor/acceptor is H118. The active-site Schiff-base intermediate with substrate is the K143. 3-dehydroquinate is bound by residues R186 and Q209.

It belongs to the type-I 3-dehydroquinase family. As to quaternary structure, homodimer.

The catalysed reaction is 3-dehydroquinate = 3-dehydroshikimate + H2O. It functions in the pathway metabolic intermediate biosynthesis; chorismate biosynthesis; chorismate from D-erythrose 4-phosphate and phosphoenolpyruvate: step 3/7. In terms of biological role, involved in the third step of the chorismate pathway, which leads to the biosynthesis of aromatic amino acids. Catalyzes the cis-dehydration of 3-dehydroquinate (DHQ) and introduces the first double bond of the aromatic ring to yield 3-dehydroshikimate. The protein is 3-dehydroquinate dehydratase of Streptococcus agalactiae serotype Ia (strain ATCC 27591 / A909 / CDC SS700).